Consider the following 148-residue polypeptide: MVARHFSFFLALLILYDLIPSNQGVEINPTIIKQVRKLRMRCLNQTGASVDVIDKSVKNRILPTDPEIKCFLYCMFDMFGLIDSQNIMHLEALLEVLPEEIHKTINGLVSSCGTQKGKDGCDTAYETVKCYIAVNGKFIWEEIIVLLG.

The signal sequence occupies residues 1-23; it reads MVARHFSFFLALLILYDLIPSNQ. Intrachain disulfides connect Cys42-Cys74, Cys70-Cys121, and Cys112-Cys130.

This sequence belongs to the PBP/GOBP family. Expressed in the antenna, mostly on the anterior surface of the third antennal segment. Expressed in auxiliary cells and the third antennal segment and exported to the sensillar lymph (at protein level).

Its subcellular location is the secreted. Its function is as follows. Odorant-binding protein required for olfactory behavior and activity of pheromone-sensitive neurons in response to the male-specific pheromone cis-vaccenyl acetate (cVA). Modulates social responsivity differently in males and females, regulating male aggression and female receptivity respectively. This is General odorant-binding protein 69a (Obp69a) from Drosophila melanogaster (Fruit fly).